We begin with the raw amino-acid sequence, 367 residues long: tRNA N6-adenosine threonylcarbamoyltransferase (367 aa).

Positions 123 and 127 each coordinate Fe cation. Substrate contacts are provided by residues 145–149, aspartate 178, glycine 191, and asparagine 288; that span reads LVSGG. Position 316 (aspartate 316) interacts with Fe cation.

It belongs to the KAE1 / TsaD family. The cofactor is Fe(2+).

The protein resides in the cytoplasm. The catalysed reaction is L-threonylcarbamoyladenylate + adenosine(37) in tRNA = N(6)-L-threonylcarbamoyladenosine(37) in tRNA + AMP + H(+). Its function is as follows. Required for the formation of a threonylcarbamoyl group on adenosine at position 37 (t(6)A37) in tRNAs that read codons beginning with adenine. Is involved in the transfer of the threonylcarbamoyl moiety of threonylcarbamoyl-AMP (TC-AMP) to the N6 group of A37, together with TsaE and TsaB. TsaD likely plays a direct catalytic role in this reaction. In Caulobacter vibrioides (strain ATCC 19089 / CIP 103742 / CB 15) (Caulobacter crescentus), this protein is tRNA N6-adenosine threonylcarbamoyltransferase.